Here is a 633-residue protein sequence, read N- to C-terminus: ATP-dependent RNA helicase mss116, mitochondrial (633 aa).

Residues Met-1–Gly-32 constitute a mitochondrion transit peptide. The short motif at Glu-38–Ile-66 is the Q motif element. One can recognise a Helicase ATP-binding domain in the interval Ile-70–Thr-248. Residue Pro-83–His-90 participates in ATP binding. Positions Arg-195–Glu-198 match the DEAD box motif. Residues Phe-262–Leu-429 form the Helicase C-terminal domain. Residues Phe-567 to Ala-633 form a disordered region.

The protein belongs to the DEAD box helicase family. DDX18/HAS1 subfamily.

Its subcellular location is the mitochondrion matrix. It carries out the reaction ATP + H2O = ADP + phosphate + H(+). Its function is as follows. ATP-dependent RNA helicase required for mitochondrial splicing of group I and II introns. Also required for efficient mitochondrial translation. The sequence is that of ATP-dependent RNA helicase mss116, mitochondrial (mss116) from Aspergillus oryzae (strain ATCC 42149 / RIB 40) (Yellow koji mold).